We begin with the raw amino-acid sequence, 510 residues long: Histidine ammonia-lyase (510 aa).

The 5-imidazolinone (Ala-Gly) cross-link spans 143–145 (ASG). S144 is modified (2,3-didehydroalanine (Ser)).

Belongs to the PAL/histidase family. Post-translationally, contains an active site 4-methylidene-imidazol-5-one (MIO), which is formed autocatalytically by cyclization and dehydration of residues Ala-Ser-Gly.

It is found in the cytoplasm. It carries out the reaction L-histidine = trans-urocanate + NH4(+). It functions in the pathway amino-acid degradation; L-histidine degradation into L-glutamate; N-formimidoyl-L-glutamate from L-histidine: step 1/3. This is Histidine ammonia-lyase from Aliivibrio fischeri (strain MJ11) (Vibrio fischeri).